A 385-amino-acid polypeptide reads, in one-letter code: Pepsin A (385 aa).

The signal sequence occupies residues 1–15; that stretch reads MKWLLLLSLVVLSEC. Positions 16–59 are cleaved as a propeptide — activation peptide; that stretch reads LVKVPLVRKKSLRQNLIKNGKLKDFLKTHKHNPASKYFPEAAAL. The region spanning 73–382 is the Peptidase A1 domain; that stretch reads YFGTIGIGTP…DRANNKVGLA (310 aa). Aspartate 91 is an active-site residue. A disulfide bridge links cysteine 104 with cysteine 109. Serine 127 carries the phosphoserine modification. A disulfide bridge connects residues cysteine 265 and cysteine 269. Aspartate 274 is a catalytic residue. A disulfide bond links cysteine 308 and cysteine 341.

Belongs to the peptidase A1 family. In terms of processing, minor amounts of the active enzyme occur with 'Ala-58' at the amino end.

It localises to the secreted. The catalysed reaction is Preferential cleavage: hydrophobic, preferably aromatic, residues in P1 and P1' positions. Cleaves 1-Phe-|-Val-2, 4-Gln-|-His-5, 13-Glu-|-Ala-14, 14-Ala-|-Leu-15, 15-Leu-|-Tyr-16, 16-Tyr-|-Leu-17, 23-Gly-|-Phe-24, 24-Phe-|-Phe-25 and 25-Phe-|-Tyr-26 bonds in the B chain of insulin.. Functionally, shows particularly broad specificity; although bonds involving phenylalanine and leucine are preferred, many others are also cleaved to some extent. This chain is Pepsin A (PGA), found in Sus scrofa (Pig).